The sequence spans 142 residues: Large ribosomal subunit protein bL17 (142 aa).

This sequence belongs to the bacterial ribosomal protein bL17 family. In terms of assembly, part of the 50S ribosomal subunit. Contacts protein L32.

This chain is Large ribosomal subunit protein bL17, found in Rickettsia bellii (strain OSU 85-389).